The chain runs to 407 residues: MARKDTNKQYSLRKLKTGTASVAVAVAVLGAGFANQTTVKANSKNPVPVKKEAKLSEAELHDKIKNLEEEKAELFEKLDKVEEEHKKVEEEHKKDHEKLEKKSEDVERHYLRQLDQEYKEQQERQKNLEELERQSQREVEKRYQEQLQKQQQLEKEKQISEASRKSLRRDLEASRAAKKDLEAEHQKLKEEKQISEASRKSLRRDLEASRAAKKDLEAEHQKLKEEKQISEASRQGLSRDLEASRAAKKDLEAEHQKLKEEKQISEASRQGLSRDLEASREAKKKVEADLAEANSKLQALEKLNKELEEGKKLSEKEKAELQAKLEAEAKALKEQLAKQAEELAKLKGNQTPNAKVAPQANRSRSAMTQQKRTLPSTGETANPFFTAAAATVMVSAGMLALKRKEEN.

An N-terminal signal peptide occupies residues 1–41 (MARKDTNKQYSLRKLKTGTASVAVAVAVLGAGFANQTTVKA). Positions 81–94 (VEEEHKKVEEEHKK) are 2 X 7 AA tandem repeats. 4 stretches are compositionally biased toward basic and acidic residues: residues 83-144 (EEHK…KRYQ), 152-229 (QLEK…EKQI), 237-264 (LSRD…EKQI), and 272-288 (LSRD…KVEA). Residues 83–289 (EEHKKVEEEH…REAKKKVEAD (207 aa)) form a disordered region. C repeat units follow at residues 151 to 185 (QQLE…EAEH), 186 to 220 (QKLK…EAEH), 221 to 255 (QKLK…EAEH), and 256 to 290 (QKLK…EADL). D repeat units lie at residues 323–328 (AKLEAE), 329–334 (AKALKE), 337–342 (AKQAEE), and 344–349 (AKLKGN). A disordered region spans residues 344 to 382 (AKLKGNQTPNAKVAPQANRSRSAMTQQKRTLPSTGETAN). The segment covering 360-380 (ANRSRSAMTQQKRTLPSTGET) has biased composition (polar residues). An LPXTG sorting signal motif is present at residues 374–378 (LPSTG). Position 377 is a pentaglycyl murein peptidoglycan amidated threonine (Thr377). Positions 378–407 (GETANPFFTAAAATVMVSAGMLALKRKEEN) are cleaved as a propeptide — removed by sortase.

Belongs to the M protein family.

It is found in the secreted. It localises to the cell wall. Functionally, this protein is one of the different antigenic serotypes of protein M. Protein M is closely associated with virulence of the bacterium and can render the organism resistant to phagocytosis. In Streptococcus pyogenes, this protein is M protein, serotype 2.1 (emmL2.1).